Consider the following 132-residue polypeptide: Fatty acid-binding protein, intestinal (132 aa).

The residue at position 2 (Ala-2) is an N-acetylalanine. The hexadecanoate site is built by Trp-83 and Arg-107. Tetradecanoate-binding residues include Trp-83 and Arg-107.

Belongs to the calycin superfamily. Fatty-acid binding protein (FABP) family. In terms of tissue distribution, expressed in the small intestine and at much lower levels in the large intestine. Highest expression levels in the jejunum.

It is found in the cytoplasm. In terms of biological role, FABPs are thought to play a role in the intracellular transport of long-chain fatty acids and their acyl-CoA esters. FABP2 is probably involved in triglyceride-rich lipoprotein synthesis. Binds saturated long-chain fatty acids with a high affinity, but binds with a lower affinity to unsaturated long-chain fatty acids. FABP2 may also help maintain energy homeostasis by functioning as a lipid sensor. The protein is Fatty acid-binding protein, intestinal (FABP2) of Homo sapiens (Human).